The following is a 245-amino-acid chain: Putative binding protein HI_1525 (245 aa).

Residues 1–19 form the signal peptide; it reads MKKLVAVTSMILTTFSVQA. S56 and V163 together coordinate molybdate.

It belongs to the bacterial solute-binding protein ModA family.

The protein resides in the periplasm. Its function is as follows. Probably involved in the binding-dependent system. This is Putative binding protein HI_1525 from Haemophilus influenzae (strain ATCC 51907 / DSM 11121 / KW20 / Rd).